The primary structure comprises 292 residues: ATP synthase gamma chain (292 aa).

The protein belongs to the ATPase gamma chain family. F-type ATPases have 2 components, CF(1) - the catalytic core - and CF(0) - the membrane proton channel. CF(1) has five subunits: alpha(3), beta(3), gamma(1), delta(1), epsilon(1). CF(0) has three main subunits: a, b and c.

The protein localises to the cell membrane. In terms of biological role, produces ATP from ADP in the presence of a proton gradient across the membrane. The gamma chain is believed to be important in regulating ATPase activity and the flow of protons through the CF(0) complex. In Streptococcus pneumoniae (strain JJA), this protein is ATP synthase gamma chain.